We begin with the raw amino-acid sequence, 699 residues long: Ribosomal RNA large subunit methyltransferase K/L (699 aa).

One can recognise a THUMP domain in the interval 44–155 (DAYKLCLWSR…RDNVILGIDL (112 aa)).

The protein belongs to the methyltransferase superfamily. RlmKL family.

It localises to the cytoplasm. The enzyme catalyses guanosine(2445) in 23S rRNA + S-adenosyl-L-methionine = N(2)-methylguanosine(2445) in 23S rRNA + S-adenosyl-L-homocysteine + H(+). The catalysed reaction is guanosine(2069) in 23S rRNA + S-adenosyl-L-methionine = N(2)-methylguanosine(2069) in 23S rRNA + S-adenosyl-L-homocysteine + H(+). Specifically methylates the guanine in position 2445 (m2G2445) and the guanine in position 2069 (m7G2069) of 23S rRNA. In Alteromonas mediterranea (strain DSM 17117 / CIP 110805 / LMG 28347 / Deep ecotype), this protein is Ribosomal RNA large subunit methyltransferase K/L.